The sequence spans 117 residues: MARVKRGVMVRKRHKKLLEQAKGYRGSRSRRVKVARETVMKALWYAYRDRRNRKRDFRRLWIIRINAAARMHGMSYSRLMNGLKRAGIELDRKVLADMAVRDPAAFGRVVEQAQQVV.

Belongs to the bacterial ribosomal protein bL20 family.

In terms of biological role, binds directly to 23S ribosomal RNA and is necessary for the in vitro assembly process of the 50S ribosomal subunit. It is not involved in the protein synthesizing functions of that subunit. This is Large ribosomal subunit protein bL20 from Roseiflexus castenholzii (strain DSM 13941 / HLO8).